A 381-amino-acid chain; its full sequence is L-lactate dehydrogenase (381 aa).

Residues 1 to 380 (MIISASTDYR…SADSLVRELG (380 aa)) enclose the FMN hydroxy acid dehydrogenase domain. Y24 contacts substrate. FMN-binding residues include S106 and Q127. Y129 contacts substrate. Position 155 (T155) interacts with FMN. R164 is a substrate binding site. FMN is bound at residue K251. H275 (proton acceptor) is an active-site residue. R278 is a binding site for substrate. 306–330 (DSGIRTGLDVVRMIALGADSVLLGR) is an FMN binding site.

Belongs to the FMN-dependent alpha-hydroxy acid dehydrogenase family. Homotetramer. FMN is required as a cofactor.

Its subcellular location is the cell inner membrane. It carries out the reaction (S)-lactate + A = pyruvate + AH2. In terms of biological role, catalyzes the conversion of L-lactate to pyruvate. Is coupled to the respiratory chain. In Pseudomonas aeruginosa (strain UCBPP-PA14), this protein is L-lactate dehydrogenase.